The chain runs to 506 residues: Tetratricopeptide repeat protein 8 (506 aa).

A disordered region spans residues 83 to 112 (RPGTSFARPKTSAKGVNPILRPTTNAGRPL). 8 TPR repeats span residues 217–250 (YYWKNQLAKCYLRLGMLQDATKQLQSSLEQKKLI), 251–283 (ETFALLSKAYNRVDQPMAALKTYSAGLEVFPEN), 284–317 (VTMLTGMARVQEALGEYDESVKLYKRVLDAESNN), 319–351 (EAIACVATTYYYGGKPELAMRYYRRILQMGVSS), 353–385 (ELFLNIGLCCMAAQQFDFALSSILRAQSTMTDD), 388–421 (ADVWYNIGQILVDIGDLVSAARSFRIALSHDPDH), 423–455 (ESLVNLGILKHREGKIDEARSLYSSATSKNPYM), and 456–489 (FEGNYNLGLVSFTQGKYHECRELIEKALAAFPEH).

In terms of assembly, part of BBSome complex, that contains at least bbs-1, bbs-2, bbs-4, bbs-5, osm-12, bbs-8/ttc-8 and bbs-9. As to expression, expressed in head and tail neurons. Expressed in ciliated male tail-neurons. Expressed in thermosensory and CO(2) sensory AFD neurons.

It localises to the cell projection. It is found in the cilium. The protein resides in the cytoplasm. Its subcellular location is the cytoskeleton. The protein localises to the cilium basal body. It localises to the cilium axoneme. Functionally, component of the BBSome complex. The BBSome complex is thought to function as a coat complex required for sorting of specific membrane proteins to the primary cilia. The BBSome complex is required for ciliogenesis but is dispensable for centriolar satellite function. Required for proper BBSome complex assembly and its ciliary localization. Required for cilia biogenesis and both the assembly and movement of intraflagellar transport proteins along the ciliary axoneme. Plays a role in guanylyl cyclase localization in the ring-like structures at the base of the finger compartment in AFD sensory neurons. The sequence is that of Tetratricopeptide repeat protein 8 from Caenorhabditis elegans.